We begin with the raw amino-acid sequence, 551 residues long: Solute carrier family 22 member 4 (551 aa).

Residues 1–20 (MRDYDEAIAFLGEWGPFQRL) lie on the Cytoplasmic side of the membrane. A helical membrane pass occupies residues 21–41 (IFFLLSASIIPNGFNGMSVVF). Over 42–141 (LAGTPEHRCR…WNLVCEDNWK (100 aa)) the chain is Extracellular. 3 N-linked (GlcNAc...) asparagine glycosylation sites follow: asparagine 57, asparagine 64, and asparagine 91. Residues 142-162 (VPLTTSLFFVGVLLGSFVSGQ) traverse the membrane as a helical segment. Residues 163 to 171 (LSDRFGRKN) lie on the Cytoplasmic side of the membrane. Residues 172–192 (VLFATMAVQTGFSFLQIFSIS) traverse the membrane as a helical segment. At 193–197 (WEMFT) the chain is on the extracellular side. Residues 198 to 218 (VLFLIVGMGQISNYVVAFILG) form a helical membrane-spanning segment. 218–225 (GTEILGKS) contributes to the ATP binding site. Over 219–232 (TEILGKSVRIIFST) the chain is Cytoplasmic. Residues 233 to 253 (LGVCTFFAVGYMLLPLFAYFI) form a helical membrane-spanning segment. The Extracellular portion of the chain corresponds to 254 to 257 (RDWR). The helical transmembrane segment at 258–278 (MLLLALTVPGVLCVPLWWFIP) threads the bilayer. Topologically, residues 279–337 (ESPRWLISQRRFREAEDIIQKAAKMNNIAVPAVIFDSVEELNPLKQQKAFILDLFRTWN) are cytoplasmic. A helical membrane pass occupies residues 338–358 (IAIMTIMSLLLWMLTSVGYFA). Residues 359–371 (LSLDTPNLHGDAY) are Extracellular-facing. A helical transmembrane segment spans residues 372-392 (LNCFLSALIEIPAYITAWLLL). Topologically, residues 393 to 399 (RTLPRRY) are cytoplasmic. Residues 400–420 (IIAAVLFWGGGVLLFIQLVPV) traverse the membrane as a helical segment. The Extracellular portion of the chain corresponds to 421–426 (DYYFLS). The helical transmembrane segment at 427-447 (IGLVMLGKFGITSAFSMLYVF) threads the bilayer. Over 448–460 (TAELYPTMVRNMA) the chain is Cytoplasmic. Residues 461-481 (VGVTSMASRVGSIIAPYFVYL) traverse the membrane as a helical segment. The Extracellular segment spans residues 482 to 486 (GAYNR). A helical membrane pass occupies residues 487-507 (MLPYIVMGSLTVLIGILTLFF). Residues 508-551 (PESLGMTLPETLEQMQKVKWFRSGKKTRDSMETEENPKVLITAF) are Cytoplasmic-facing.

It belongs to the major facilitator (TC 2.A.1) superfamily. Organic cation transporter (TC 2.A.1.19) family. Interacts with PDZK1.

It localises to the apical cell membrane. The protein localises to the basal cell membrane. Its subcellular location is the mitochondrion membrane. It carries out the reaction ergothioneine(out) + Na(+)(out) = ergothioneine(in) + Na(+)(in). The enzyme catalyses acetylcholine(in) = acetylcholine(out). The catalysed reaction is (R)-carnitine(out) + Na(+)(out) = (R)-carnitine(in) + Na(+)(in). It catalyses the reaction glycine betaine(out) + Na(+)(out) = glycine betaine(in) + Na(+)(in). Allosterically activated by intracellular ATP. Transporter that mediates the transport of endogenous and microbial zwitterions and organic cations. Functions as a Na(+)-dependent and pH-dependent high affinity microbial symporter of potent food-derived antioxidant ergothioeine. Transports one sodium ion with one ergothioeine molecule. Involved in the absorption of ergothioneine from the luminal/apical side of the small intestine and renal tubular cells, and into non-parenchymal liver cells, thereby contributing to maintain steady-state ergothioneine level in the body. Also mediates the bidirectional transport of acetycholine, although the exact transport mechanism has not been fully identified yet. Most likely exports anti-inflammatory acetylcholine in non-neuronal tissues, thereby contributing to the non-neuronal cholinergic system. Displays a general physiological role linked to better survival by controlling inflammation and oxidative stress, which may be related to ergothioneine and acetycholine transports. May also function as a low-affinity Na(+)-dependent transporter of L-carnitine through the mitochondrial membrane, thereby maintaining intracellular carnitine homeostasis. May contribute to regulate the transport of cationic compounds in testis across the blood-testis-barrier. The polypeptide is Solute carrier family 22 member 4 (SLC22A4) (Papio anubis (Olive baboon)).